Reading from the N-terminus, the 237-residue chain is Corrinoid adenosyltransferase MMAB (237 aa).

The N-terminal 26 residues, 1–26, are a transit peptide targeting the mitochondrion; sequence MAVWLFGGRLGLRGRLSACRLLCPRF. The tract at residues 30–49 is disordered; the sequence is GPQGGEDGDRLQPSSTAAKI. ATP is bound by residues 54-57, 62-63, and lysine 72; these read TKTG and SS. Serine 128 bears the Phosphoserine mark. 184–188 contributes to the ATP binding site; that stretch reads RRAER. Lysine 205 is modified (N6-succinyllysine). Asparagine 208 is a binding site for ATP. N6-acetyllysine; alternate is present on lysine 224. Lysine 224 carries the N6-succinyllysine; alternate modification.

This sequence belongs to the Cob(I)alamin adenosyltransferase family. In terms of assembly, homotrimer.

It is found in the mitochondrion. The enzyme catalyses cob(I)alamin-[corrinoid adenosyltransferase] + ATP = apo-[corrinoid adenosyltransferase] + adenosylcob(III)alamin + triphosphate. Functionally, converts cob(I)alamin to adenosylcobalamin (adenosylcob(III)alamin), a coenzyme for methylmalonyl-CoA mutase, therefore participates in the final step of the vitamin B12 conversion. Generates adenosylcobalamin (AdoCbl) and directly delivers the cofactor to MUT in a transfer that is stimulated by ATP-binding to MMAB and gated by MMAA. In Mus musculus (Mouse), this protein is Corrinoid adenosyltransferase MMAB.